Reading from the N-terminus, the 88-residue chain is Small ribosomal subunit protein uS17 (88 aa).

It belongs to the universal ribosomal protein uS17 family. As to quaternary structure, part of the 30S ribosomal subunit.

In terms of biological role, one of the primary rRNA binding proteins, it binds specifically to the 5'-end of 16S ribosomal RNA. This chain is Small ribosomal subunit protein uS17, found in Lactobacillus gasseri (strain ATCC 33323 / DSM 20243 / BCRC 14619 / CIP 102991 / JCM 1131 / KCTC 3163 / NCIMB 11718 / NCTC 13722 / AM63).